The primary structure comprises 123 residues: Large ribosomal subunit protein bL12 (123 aa).

An N6-methyllysine modification is found at lysine 84. Positions 94–123 are disordered; it reads PATLKEGMSKEDGDEAKTKLEEAGASVELK. Over residues 100–115 the composition is skewed to basic and acidic residues; the sequence is GMSKEDGDEAKTKLEE.

It belongs to the bacterial ribosomal protein bL12 family. In terms of assembly, homodimer. Part of the ribosomal stalk of the 50S ribosomal subunit. Forms a multimeric L10(L12)X complex, where L10 forms an elongated spine to which 2 to 4 L12 dimers bind in a sequential fashion. Binds GTP-bound translation factors.

In terms of biological role, seems to be the binding site for several of the factors involved in protein synthesis and appears to be essential for accurate translation. Functionally, forms part of the ribosomal stalk which helps the ribosome interact with GTP-bound translation factors. Is thus essential for accurate translation. This Halophilic eubacterium NRCC 41227 protein is Large ribosomal subunit protein bL12.